The following is a 202-amino-acid chain: Na(+)-translocating NADH-quinone reductase subunit E (202 aa).

The next 6 membrane-spanning stretches (helical) occupy residues 11–31 (SVFI…FLAM), 35–55 (INAA…TVPA), 81–101 (FLSF…MEMV), 114–134 (GVFL…LFMV), 144–164 (VVYG…LAGI), and 180–200 (LGIT…FGGI).

This sequence belongs to the NqrDE/RnfAE family. As to quaternary structure, composed of six subunits; NqrA, NqrB, NqrC, NqrD, NqrE and NqrF.

The protein resides in the cell inner membrane. The catalysed reaction is a ubiquinone + n Na(+)(in) + NADH + H(+) = a ubiquinol + n Na(+)(out) + NAD(+). Functionally, NQR complex catalyzes the reduction of ubiquinone-1 to ubiquinol by two successive reactions, coupled with the transport of Na(+) ions from the cytoplasm to the periplasm. NqrA to NqrE are probably involved in the second step, the conversion of ubisemiquinone to ubiquinol. The chain is Na(+)-translocating NADH-quinone reductase subunit E from Cellvibrio japonicus (strain Ueda107) (Pseudomonas fluorescens subsp. cellulosa).